We begin with the raw amino-acid sequence, 32 residues long: Acyclotide phyb-M (32 aa).

The residue at position 1 (Gln1) is a Pyrrolidone carboxylic acid. 3 disulfide bridges follow: Cys5–Cys21, Cys9–Cys23, and Cys14–Cys28.

In terms of processing, contains 3 disulfide bonds. Expressed in midvein, lamina and periphery of leaves (at protein level).

Functionally, probably participates in a plant defense mechanism. The protein is Acyclotide phyb-M of Petunia hybrida (Petunia).